Here is a 945-residue protein sequence, read N- to C-terminus: Oxysterol-binding protein homolog C23H4.01c (945 aa).

The GOLD domain maps to Met1–Ala131. One can recognise a PH domain in the interval Lys149 to Asn243. Residues Ser288, Ser419, and Ser421 each carry the phosphoserine modification. Disordered stretches follow at residues Glu396–Ser555 and Leu846–Lys894. Over residues Thr443–Ser454 the composition is skewed to low complexity. Positions Leu460 to Asp470 are enriched in polar residues. Residues Glu482 to Met499 are compositionally biased toward basic and acidic residues. Ser503 bears the Phosphoserine mark.

The protein belongs to the OSBP family.

The protein localises to the cytoplasm. The protein is Oxysterol-binding protein homolog C23H4.01c of Schizosaccharomyces pombe (strain 972 / ATCC 24843) (Fission yeast).